A 416-amino-acid polypeptide reads, in one-letter code: UDP-N-acetylglucosamine 1-carboxyvinyltransferase (416 aa).

Residue 22–23 (KN) participates in phosphoenolpyruvate binding. Arg-91 contacts UDP-N-acetyl-alpha-D-glucosamine. The active-site Proton donor is Cys-115. At Cys-115 the chain carries 2-(S-cysteinyl)pyruvic acid O-phosphothioketal. Residues 120 to 124 (RPIDL), Asp-303, and Ile-325 each bind UDP-N-acetyl-alpha-D-glucosamine.

The protein belongs to the EPSP synthase family. MurA subfamily.

It localises to the cytoplasm. The catalysed reaction is phosphoenolpyruvate + UDP-N-acetyl-alpha-D-glucosamine = UDP-N-acetyl-3-O-(1-carboxyvinyl)-alpha-D-glucosamine + phosphate. Its pathway is cell wall biogenesis; peptidoglycan biosynthesis. Its function is as follows. Cell wall formation. Adds enolpyruvyl to UDP-N-acetylglucosamine. In Lawsonia intracellularis (strain PHE/MN1-00), this protein is UDP-N-acetylglucosamine 1-carboxyvinyltransferase.